Here is a 212-residue protein sequence, read N- to C-terminus: Adenylate kinase (212 aa).

10–15 (GAGKGT) lines the ATP pocket. Residues 30–59 (STGDMFRAAMANQTEMGVLAKSYIDKGELV) form an NMP region. AMP contacts are provided by residues threonine 31, arginine 36, 57 to 59 (ELV), 86 to 89 (GYPR), and glutamine 93. The LID stretch occupies residues 127 to 159 (GRIIHRVTGETFHKVFNPPVDYKEEDYYQREDD). ATP contacts are provided by residues arginine 128 and 137–138 (TF). Arginine 156 and arginine 167 together coordinate AMP. ATP is bound at residue glutamine 195.

This sequence belongs to the adenylate kinase family. As to quaternary structure, monomer.

It is found in the cytoplasm. It catalyses the reaction AMP + ATP = 2 ADP. It functions in the pathway purine metabolism; AMP biosynthesis via salvage pathway; AMP from ADP: step 1/1. Catalyzes the reversible transfer of the terminal phosphate group between ATP and AMP. Plays an important role in cellular energy homeostasis and in adenine nucleotide metabolism. The sequence is that of Adenylate kinase from Streptococcus pneumoniae (strain JJA).